The chain runs to 636 residues: Threonine--tRNA ligase (636 aa).

The TGS domain occupies 1 to 61; it reads MINITLPDDS…RNDCAVRLIT (61 aa). A catalytic region spans residues 238 to 528; it reads DHRKIGTRMG…LVEHFAGKFP (291 aa). Residues Cys329, His380, and His505 each contribute to the Zn(2+) site.

This sequence belongs to the class-II aminoacyl-tRNA synthetase family. As to quaternary structure, homodimer. Zn(2+) serves as cofactor.

It is found in the cytoplasm. The enzyme catalyses tRNA(Thr) + L-threonine + ATP = L-threonyl-tRNA(Thr) + AMP + diphosphate + H(+). In terms of biological role, catalyzes the attachment of threonine to tRNA(Thr) in a two-step reaction: L-threonine is first activated by ATP to form Thr-AMP and then transferred to the acceptor end of tRNA(Thr). Also edits incorrectly charged L-seryl-tRNA(Thr). The protein is Threonine--tRNA ligase of Desulforapulum autotrophicum (strain ATCC 43914 / DSM 3382 / VKM B-1955 / HRM2) (Desulfobacterium autotrophicum).